The following is a 102-amino-acid chain: Large ribosomal subunit protein bL21 (102 aa).

The protein belongs to the bacterial ribosomal protein bL21 family. Part of the 50S ribosomal subunit. Contacts protein L20.

This protein binds to 23S rRNA in the presence of protein L20. The protein is Large ribosomal subunit protein bL21 of Geobacter metallireducens (strain ATCC 53774 / DSM 7210 / GS-15).